The sequence spans 323 residues: Beta-ketoacyl-[acyl-carrier-protein] synthase III (323 aa).

Catalysis depends on residues C113 and H250. The segment at 251–255 (QANKR) is ACP-binding. The active site involves N280.

This sequence belongs to the thiolase-like superfamily. FabH family. In terms of assembly, homodimer.

It localises to the cytoplasm. The enzyme catalyses malonyl-[ACP] + acetyl-CoA + H(+) = 3-oxobutanoyl-[ACP] + CO2 + CoA. The protein operates within lipid metabolism; fatty acid biosynthesis. In terms of biological role, catalyzes the condensation reaction of fatty acid synthesis by the addition to an acyl acceptor of two carbons from malonyl-ACP. Catalyzes the first condensation reaction which initiates fatty acid synthesis and may therefore play a role in governing the total rate of fatty acid production. Possesses both acetoacetyl-ACP synthase and acetyl transacylase activities. Its substrate specificity determines the biosynthesis of branched-chain and/or straight-chain of fatty acids. The chain is Beta-ketoacyl-[acyl-carrier-protein] synthase III from Brucella suis (strain ATCC 23445 / NCTC 10510).